The following is a 490-amino-acid chain: Cysteine--tRNA ligase (490 aa).

Cys-43 provides a ligand contact to Zn(2+). The 'HIGH' region signature appears at 45-55 (MTVQSSPHLGH). Residues 177–204 (VDEMSPAEDSDPRGKRDPRDFALWKGHK) form a disordered region. Residues 186–204 (SDPRGKRDPRDFALWKGHK) are compositionally biased toward basic and acidic residues. Zn(2+) is bound by residues Cys-228, His-253, and Glu-257. The 'KMSKS' region motif lies at 284–288 (KMSKS). Residue Lys-287 participates in ATP binding.

It belongs to the class-I aminoacyl-tRNA synthetase family. Monomer. Requires Zn(2+) as cofactor.

Its subcellular location is the cytoplasm. It catalyses the reaction tRNA(Cys) + L-cysteine + ATP = L-cysteinyl-tRNA(Cys) + AMP + diphosphate. The chain is Cysteine--tRNA ligase from Cutibacterium acnes (strain DSM 16379 / KPA171202) (Propionibacterium acnes).